We begin with the raw amino-acid sequence, 598 residues long: Arginine--tRNA ligase (598 aa).

Positions 135 to 145 (ANPTGPIHIGG) match the 'HIGH' region motif. The disordered stretch occupies residues 229-248 (VDGGTDEKGEPLGEGDSEQR). A compositionally biased stretch (basic and acidic residues) spans 231–248 (GGTDEKGEPLGEGDSEQR).

Belongs to the class-I aminoacyl-tRNA synthetase family. Monomer.

It is found in the cytoplasm. The enzyme catalyses tRNA(Arg) + L-arginine + ATP = L-arginyl-tRNA(Arg) + AMP + diphosphate. The protein is Arginine--tRNA ligase of Bifidobacterium animalis subsp. lactis (strain AD011).